The primary structure comprises 429 residues: Transcriptional adapter 3 (429 aa).

Residues 41-70 (IEELDTLQLELETLLSSASRRLRALEEQRQ) are a coiled coil. Disordered regions lie at residues 86–132 (KLEK…TKVQ), 208–257 (EERR…PFGP), and 274–308 (PMED…HTRS). Composition is skewed to basic and acidic residues over residues 208 to 221 (EERR…DKKK) and 230 to 249 (LDAK…HEPP). Residues 364-404 (LLKLAREEMRKQELRQRVRVADNEVMEAFRRIMAARQKKRT) are a coiled coil.

This sequence belongs to the NGG1 family.

It is found in the nucleus. In terms of biological role, functions as a component of the PCAF complex. The PCAF complex is capable of efficiently acetylating histones in a nucleosomal context. The protein is Transcriptional adapter 3 (tada3) of Danio rerio (Zebrafish).